Reading from the N-terminus, the 839-residue chain is Homeobox-leucine zipper protein HOX10 (839 aa).

Disordered stretches follow at residues 1 to 24 (MAAAVAMRGSSSDGGGYDKVSGMD) and 132 to 157 (QNTPLANDTSCESNVTTPQNPLRDAS). The segment at residues 24–87 (DSGKYVRYTP…NRRCRDKQRK (64 aa)) is a DNA-binding region (homeobox). Residues 91–134 (RLQAVNRKLTAMNKLLMEENERLQKQVSQLVHENAHMRQQLQNT) adopt a coiled-coil conformation. The START domain maps to 155–383 (DASNPSGLLS…IAQETSGEVV (229 aa)).

It belongs to the HD-ZIP homeobox family. Class III subfamily. In terms of tissue distribution, expressed in stems, leaf sheaths and blades and panicles.

The protein localises to the nucleus. Functionally, probable transcription factor. The sequence is that of Homeobox-leucine zipper protein HOX10 (HOX10) from Oryza sativa subsp. indica (Rice).